Consider the following 715-residue polypeptide: Fatty acid oxidation complex subunit alpha (715 aa).

Residues 1-190 (MTTTSAFMLN…KAGLVDDVVP (190 aa)) form an enoyl-CoA hydratase region. A 3-hydroxyacyl-CoA dehydrogenase region spans residues 306 to 715 (GPLNSVGILG…WTNGETDQGN (410 aa)).

This sequence in the N-terminal section; belongs to the enoyl-CoA hydratase/isomerase family. It in the central section; belongs to the 3-hydroxyacyl-CoA dehydrogenase family. As to quaternary structure, heterotetramer of two alpha chains (FadJ) and two beta chains (FadI).

It localises to the cytoplasm. The catalysed reaction is a (3S)-3-hydroxyacyl-CoA = a (2E)-enoyl-CoA + H2O. It carries out the reaction a 4-saturated-(3S)-3-hydroxyacyl-CoA = a (3E)-enoyl-CoA + H2O. It catalyses the reaction a (3S)-3-hydroxyacyl-CoA + NAD(+) = a 3-oxoacyl-CoA + NADH + H(+). The enzyme catalyses (3S)-3-hydroxybutanoyl-CoA = (3R)-3-hydroxybutanoyl-CoA. The protein operates within lipid metabolism; fatty acid beta-oxidation. In terms of biological role, catalyzes the formation of a hydroxyacyl-CoA by addition of water on enoyl-CoA. Also exhibits 3-hydroxyacyl-CoA epimerase and 3-hydroxyacyl-CoA dehydrogenase activities. In Salmonella enteritidis PT4 (strain P125109), this protein is Fatty acid oxidation complex subunit alpha.